Reading from the N-terminus, the 154-residue chain is Nuclear cap-binding protein subunit 2-A (154 aa).

MRNA is bound by residues Y10, Y33, 102-106, 113-117, and 123-124; these read RVDWD, RQYGR, and QV. One can recognise an RRM domain in the interval 30-108; it reads STLYVGNLSF…RLIRVDWDAG (79 aa).

Belongs to the RRM NCBP2 family. Component of the nuclear cap-binding complex (CBC), a heterodimer composed of Cbp80 and Cbp20 that interacts with m7GpppG-capped RNA. Interacts with Ars2.

The protein localises to the nucleus. Component of the cap-binding complex (CBC), which binds co-transcriptionally to the 5' cap of pre-mRNAs and is involved in various processes such as pre-mRNA splicing and RNA-mediated gene silencing (RNAi). The CBC complex is involved in miRNA-mediated RNA interference via its interaction with Ars2 and is required for primary microRNAs (miRNAs) processing. Also involved in innate immunity via the short interfering RNAs (siRNAs) processing machinery by restricting the viral RNA production. In the CBC complex, Cbp20 recognizes and binds capped RNAs (m7GpppG-capped RNA) but requires Cbp80 to stabilize the movement of its N-terminal loop and lock the CBC into a high affinity cap-binding state with the cap structure. This chain is Nuclear cap-binding protein subunit 2-A (Cbp20-A), found in Drosophila virilis (Fruit fly).